The following is a 660-amino-acid chain: MKTVVFAYHDMGCLGIEALLAAGYEISAIFTHTDNPGEKAFYGSVARLAAERGIPVYAPDDVNHPLWVERIAQLSPDVIFSFYYRHLICDEILQLAPAGAFNLHGSLLPKYRGRAPLNWVLVNGETETGVTLHRMVKRADAGAIVAQLRIAIAPDDIAITLHHKLCHAARQLLEQTLPAIKHGNILEIAQRENEATCFGRRTPDDSFLEWHKPASVLHNMVRAVADPWPGAFSYVGNQKFTVWSSRVHPHASKAQPGSVISVAPLLIACGDGALEIVTGQAGDGITMQGSQLAQTLGLVQGSRLNSQPACTARRRTRVLILGVNGFIGNHLTERLLREDHYEVYGLDIGSDAISRFLNHPHFHFVEGDISIHSEWIEYHVKKCDVVLPLVAIATPIEYTRNPLRVFELDFEENLRIIRYCVKYRKRIIFPSTSEVYGMCSDKYFDEDHSNLIVGPVNKPRWIYSVSKQLLDRVIWAYGEKEGLQFTLFRPFNWMGPRLDNLNAARIGSSRAITQLILNLVEGSPIKLIDGGKQKRCFTDIRDGIEALYRIIENAGNRCDGEIINIGNPENEASIEELGEMLLASFEKHPLRHHFPPFAGFRVVESSSYYGKGYQDVEHRKPSIRNAHRCLDWEPKIDMQETIDETLDFFLRTVDLTDKPS.

Positions 1 to 304 (MKTVVFAYHD…TLGLVQGSRL (304 aa)) are formyltransferase ArnAFT. Residue 86–88 (HLI) participates in (6R)-10-formyltetrahydrofolate binding. Catalysis depends on His104, which acts as the Proton donor; for formyltransferase activity. Residues Arg114 and 136 to 140 (VKRAD) contribute to the (6R)-10-formyltetrahydrofolate site. The interval 314 to 660 (RRTRVLILGV…RTVDLTDKPS (347 aa)) is dehydrogenase ArnADH. NAD(+) is bound by residues Asp347 and 368-369 (DI). UDP-alpha-D-glucuronate contacts are provided by residues Ala393, Tyr398, and 432-433 (TS). Residue Glu434 is the Proton acceptor; for decarboxylase activity of the active site. UDP-alpha-D-glucuronate-binding positions include Arg460, Asn492, 526 to 535 (KLIDGGKQKR), and Tyr613. Catalysis depends on Arg619, which acts as the Proton donor; for decarboxylase activity.

It in the N-terminal section; belongs to the Fmt family. UDP-L-Ara4N formyltransferase subfamily. The protein in the C-terminal section; belongs to the NAD(P)-dependent epimerase/dehydratase family. UDP-glucuronic acid decarboxylase subfamily. Homohexamer, formed by a dimer of trimers.

The enzyme catalyses UDP-alpha-D-glucuronate + NAD(+) = UDP-beta-L-threo-pentopyranos-4-ulose + CO2 + NADH. The catalysed reaction is UDP-4-amino-4-deoxy-beta-L-arabinose + (6R)-10-formyltetrahydrofolate = UDP-4-deoxy-4-formamido-beta-L-arabinose + (6S)-5,6,7,8-tetrahydrofolate + H(+). Its pathway is nucleotide-sugar biosynthesis; UDP-4-deoxy-4-formamido-beta-L-arabinose biosynthesis; UDP-4-deoxy-4-formamido-beta-L-arabinose from UDP-alpha-D-glucuronate: step 1/3. It functions in the pathway nucleotide-sugar biosynthesis; UDP-4-deoxy-4-formamido-beta-L-arabinose biosynthesis; UDP-4-deoxy-4-formamido-beta-L-arabinose from UDP-alpha-D-glucuronate: step 3/3. It participates in bacterial outer membrane biogenesis; lipopolysaccharide biosynthesis. In terms of biological role, bifunctional enzyme that catalyzes the oxidative decarboxylation of UDP-glucuronic acid (UDP-GlcUA) to UDP-4-keto-arabinose (UDP-Ara4O) and the addition of a formyl group to UDP-4-amino-4-deoxy-L-arabinose (UDP-L-Ara4N) to form UDP-L-4-formamido-arabinose (UDP-L-Ara4FN). The modified arabinose is attached to lipid A and is required for resistance to polymyxin and cationic antimicrobial peptides. The chain is Bifunctional polymyxin resistance protein ArnA from Escherichia coli (strain SE11).